A 403-amino-acid polypeptide reads, in one-letter code: Guanine nucleotide-binding protein alpha-8 subunit (403 aa).

The N-myristoyl glycine moiety is linked to residue Gly2. Cys3 carries the S-palmitoyl cysteine lipid modification. Positions 31-356 constitute a G-alpha domain; the sequence is LDFRILLLGA…KVLMKATKDL (326 aa). The tract at residues 34-47 is G1 motif; the sequence is RILLLGAGESGKST. GTP contacts are provided by residues 39–46, 174–180, 199–203, 268–271, and Ala324; these read GAGESGKS, IMTRVRT, DVGGQ, and NKKD. The Mg(2+) site is built by Ser46 and Thr180. The G2 motif stretch occupies residues 172-180; that stretch reads DCIMTRVRT. The G3 motif stretch occupies residues 195–204; that stretch reads FRVVDVGGQR. The interval 264–271 is G4 motif; the sequence is FLVLNKKD. The interval 322–327 is G5 motif; it reads IAARYK. A disordered region spans residues 353 to 403; the sequence is TKDLKKSSKQSSKSSLGNSTQNNSNNNNNNNNSNNNNGQTTIDGATAKINS. A compositionally biased stretch (low complexity) spans 374–389; it reads NNSNNNNNNNNSNNNN. A compositionally biased stretch (polar residues) spans 390-403; sequence GQTTIDGATAKINS.

It belongs to the G-alpha family. As to quaternary structure, g proteins are composed of 3 units; alpha, beta and gamma. The alpha chain contains the guanine nucleotide binding site.

Functionally, guanine nucleotide-binding proteins (G proteins) are involved as modulators or transducers in various transmembrane signaling systems. G alpha-8 is a potential analog for the G(s)-like G-proteins which stimulate adenylate cyclase in mammals. The sequence is that of Guanine nucleotide-binding protein alpha-8 subunit (gpaH) from Dictyostelium discoideum (Social amoeba).